We begin with the raw amino-acid sequence, 149 residues long: D-aminoacyl-tRNA deacylase (149 aa).

A Gly-cisPro motif, important for rejection of L-amino acids motif is present at residues G137–P138.

The protein belongs to the DTD family. Homodimer.

The protein localises to the cytoplasm. It carries out the reaction glycyl-tRNA(Ala) + H2O = tRNA(Ala) + glycine + H(+). The catalysed reaction is a D-aminoacyl-tRNA + H2O = a tRNA + a D-alpha-amino acid + H(+). Functionally, an aminoacyl-tRNA editing enzyme that deacylates mischarged D-aminoacyl-tRNAs. Also deacylates mischarged glycyl-tRNA(Ala), protecting cells against glycine mischarging by AlaRS. Acts via tRNA-based rather than protein-based catalysis; rejects L-amino acids rather than detecting D-amino acids in the active site. By recycling D-aminoacyl-tRNA to D-amino acids and free tRNA molecules, this enzyme counteracts the toxicity associated with the formation of D-aminoacyl-tRNA entities in vivo and helps enforce protein L-homochirality. The sequence is that of D-aminoacyl-tRNA deacylase from Clostridium botulinum (strain 657 / Type Ba4).